A 121-amino-acid chain; its full sequence is Basic phospholipase A2 CoaTx-II (121 aa).

7 disulfides stabilise this stretch: Cys26/Cys115, Cys28/Cys44, Cys43/Cys95, Cys49/Cys121, Cys50/Cys88, Cys57/Cys81, and Cys75/Cys86. The important for membrane-damaging activities in eukaryotes and bacteria; heparin-binding stretch occupies residues 105–117 (KKYRIYPKFLCKK).

The protein belongs to the phospholipase A2 family. Group II subfamily. K49 sub-subfamily. In terms of assembly, homodimer; non-covalently-linked. As to expression, expressed by the venom gland.

The protein localises to the secreted. In terms of biological role, snake venom phospholipase A2 (PLA2) that lacks enzymatic inactivity. It shows antibacterial activity against both Gram-negative and Gram-positive bacteria, including methicillin-resistant strains. In vivo, it causes local muscular damage, but no systemic damage (intravenous administration does not elevate plasma creatine kinase). Also causes an inflammatory activity that is demonstrated by mice paw edema induction and pro-inflammatory cytokine IL-6 elevation. A model of myotoxic mechanism has been proposed: an apo Lys49-PLA2 is activated by the entrance of a hydrophobic molecule (e.g. fatty acid) at the hydrophobic channel of the protein leading to a reorientation of a monomer. This reorientation causes a transition between 'inactive' to 'active' states, causing alignment of C-terminal and membrane-docking sites (MDoS) side-by-side and putting the membrane-disruption sites (MDiS) in the same plane, exposed to solvent and in a symmetric position for both monomers. The MDoS region stabilizes the toxin on membrane by the interaction of charged residues with phospholipid head groups. Subsequently, the MDiS region destabilizes the membrane with penetration of hydrophobic residues. This insertion causes a disorganization of the membrane, allowing an uncontrolled influx of ions (i.e. calcium and sodium), and eventually triggering irreversible intracellular alterations and cell death. This Crotalus lutosus abyssus (Grand Canyon rattlesnake) protein is Basic phospholipase A2 CoaTx-II.